Reading from the N-terminus, the 599-residue chain is Elongation factor 4 (599 aa).

Residues 4–186 (EHIRNFSIIA…EIVKKIPPPK (183 aa)) form the tr-type G domain. GTP-binding positions include 16–21 (DHGKST) and 133–136 (NKID).

This sequence belongs to the TRAFAC class translation factor GTPase superfamily. Classic translation factor GTPase family. LepA subfamily.

It is found in the cell inner membrane. The catalysed reaction is GTP + H2O = GDP + phosphate + H(+). Its function is as follows. Required for accurate and efficient protein synthesis under certain stress conditions. May act as a fidelity factor of the translation reaction, by catalyzing a one-codon backward translocation of tRNAs on improperly translocated ribosomes. Back-translocation proceeds from a post-translocation (POST) complex to a pre-translocation (PRE) complex, thus giving elongation factor G a second chance to translocate the tRNAs correctly. Binds to ribosomes in a GTP-dependent manner. This Citrifermentans bemidjiense (strain ATCC BAA-1014 / DSM 16622 / JCM 12645 / Bem) (Geobacter bemidjiensis) protein is Elongation factor 4.